Here is a 270-residue protein sequence, read N- to C-terminus: Small ribosomal subunit protein uS3 (270 aa).

Residues 38–106 (IRQMLTRGME…QVQLNILEVK (69 aa)) enclose the KH type-2 domain. The interval 212-270 (EREAAQAAQRAAGPQRRERPGRRRRGGGGGGGQQQQQAEKATAQATEAAKAAKSGNEGS) is disordered. Composition is skewed to low complexity over residues 216–225 (AQAAQRAAGP) and 245–263 (QQQQ…AKAA).

This sequence belongs to the universal ribosomal protein uS3 family. As to quaternary structure, part of the 30S ribosomal subunit. Forms a tight complex with proteins S10 and S14.

In terms of biological role, binds the lower part of the 30S subunit head. Binds mRNA in the 70S ribosome, positioning it for translation. The protein is Small ribosomal subunit protein uS3 of Thermobifida fusca (strain YX).